The chain runs to 324 residues: Fibronectin type III domain-containing protein 8 (324 aa).

Positions 179 to 280 constitute a Fibronectin type-III domain; that stretch reads PDTPFIFEHT…KPYKFATLAT (102 aa).

This Macaca fascicularis (Crab-eating macaque) protein is Fibronectin type III domain-containing protein 8 (FNDC8).